The primary structure comprises 87 residues: HssA/B-like protein 31 (87 aa).

This sequence belongs to the hssA/B family.

The chain is HssA/B-like protein 31 (hssl31) from Dictyostelium discoideum (Social amoeba).